Consider the following 241-residue polypeptide: Uridylate kinase (241 aa).

15–18 (KMSG) contacts ATP. Position 57 (G57) interacts with UMP. ATP contacts are provided by G58 and R62. Residues D77 and 138 to 145 (TGNPFFTT) contribute to the UMP site. 3 residues coordinate ATP: T165, Y171, and D174.

The protein belongs to the UMP kinase family. In terms of assembly, homohexamer.

The protein resides in the cytoplasm. It catalyses the reaction UMP + ATP = UDP + ADP. The protein operates within pyrimidine metabolism; CTP biosynthesis via de novo pathway; UDP from UMP (UMPK route): step 1/1. Inhibited by UTP. Functionally, catalyzes the reversible phosphorylation of UMP to UDP. The sequence is that of Uridylate kinase from Dichelobacter nodosus (strain VCS1703A).